Here is a 76-residue protein sequence, read N- to C-terminus: NADH-ubiquinone oxidoreductase chain 4L (76 aa).

Transmembrane regions (helical) follow at residues M1–F21, A29–L49, and Y56–A76.

Belongs to the complex I subunit 4L family.

It is found in the mitochondrion membrane. It catalyses the reaction a ubiquinone + NADH + 5 H(+)(in) = a ubiquinol + NAD(+) + 4 H(+)(out). In terms of biological role, core subunit of the mitochondrial membrane respiratory chain NADH dehydrogenase (Complex I) which catalyzes electron transfer from NADH through the respiratory chain, using ubiquinone as an electron acceptor. Part of the enzyme membrane arm which is embedded in the lipid bilayer and involved in proton translocation. This Oncorhynchus masou (Cherry salmon) protein is NADH-ubiquinone oxidoreductase chain 4L (MT-ND4L).